We begin with the raw amino-acid sequence, 251 residues long: Cell division protein ZapD (251 aa).

It belongs to the ZapD family. As to quaternary structure, interacts with FtsZ.

Its subcellular location is the cytoplasm. In terms of biological role, cell division factor that enhances FtsZ-ring assembly. Directly interacts with FtsZ and promotes bundling of FtsZ protofilaments, with a reduction in FtsZ GTPase activity. This chain is Cell division protein ZapD, found in Burkholderia lata (strain ATCC 17760 / DSM 23089 / LMG 22485 / NCIMB 9086 / R18194 / 383).